The following is a 215-amino-acid chain: 3-isopropylmalate dehydratase small subunit (215 aa).

It belongs to the LeuD family. LeuD type 1 subfamily. As to quaternary structure, heterodimer of LeuC and LeuD.

It carries out the reaction (2R,3S)-3-isopropylmalate = (2S)-2-isopropylmalate. It functions in the pathway amino-acid biosynthesis; L-leucine biosynthesis; L-leucine from 3-methyl-2-oxobutanoate: step 2/4. In terms of biological role, catalyzes the isomerization between 2-isopropylmalate and 3-isopropylmalate, via the formation of 2-isopropylmaleate. The sequence is that of 3-isopropylmalate dehydratase small subunit from Polynucleobacter necessarius subsp. necessarius (strain STIR1).